The primary structure comprises 290 residues: Probable ECF RNA polymerase sigma factor SigI (290 aa).

Residues 11–74 are sigma-70 factor domain-2; that stretch reads WRAHRAYLVD…LCLDHIKSAS (64 aa). The Polymerase core binding motif lies at 34-37; it reads DMVQ. Residues 110-162 form a sigma-70 factor domain-4_2 region; that stretch reads LALLIMLERLGPAERVVFVLHEIFGLPYQQIATTIGSQASTCRQLAHRARRKI. The H-T-H motif DNA-binding region spans 137 to 156; the sequence is YQQIATTIGSQASTCRQLAH.

This sequence belongs to the sigma-70 factor family. ECF subfamily. As to quaternary structure, interacts transiently with the RNA polymerase catalytic core formed by RpoA, RpoB, RpoC and RpoZ (2 alpha, 1 beta, 1 beta' and 1 omega subunit) to form the RNA polymerase holoenzyme that can initiate transcription.

In terms of biological role, sigma factors are initiation factors that promote the attachment of RNA polymerase to specific initiation sites and are then released. Extracytoplasmic function (ECF) sigma factors are held in an inactive form by a cognate anti-sigma factor until released, although no anti-sigma factor is known for this protein. This is Probable ECF RNA polymerase sigma factor SigI (sigI) from Mycobacterium tuberculosis (strain CDC 1551 / Oshkosh).